Reading from the N-terminus, the 864-residue chain is Leucine--tRNA ligase (864 aa).

Positions 42 to 52 (PYPSGKLHMGH) match the 'HIGH' region motif. The short motif at 619–623 (KMSKS) is the 'KMSKS' region element. Lysine 622 serves as a coordination point for ATP.

The protein belongs to the class-I aminoacyl-tRNA synthetase family.

It localises to the cytoplasm. The catalysed reaction is tRNA(Leu) + L-leucine + ATP = L-leucyl-tRNA(Leu) + AMP + diphosphate. The sequence is that of Leucine--tRNA ligase from Wigglesworthia glossinidia brevipalpis.